The chain runs to 406 residues: Digeranylgeranylglycerophospholipid reductase 2 (406 aa).

Glycine 15, glutamate 34, cysteine 45, alanine 46, glycine 48, arginine 99, alanine 123, aspartate 279, glycine 291, and isoleucine 292 together coordinate FAD.

The protein belongs to the geranylgeranyl reductase family. DGGGPL reductase subfamily. FAD serves as cofactor.

The enzyme catalyses a 2,3-bis-O-phytanyl-sn-glycerol 1-phospholipid + 8 oxidized 2[4Fe-4S]-[ferredoxin] = a 2,3-bis-O-(geranylgeranyl)-sn-glycerol 1-phospholipid + 8 reduced 2[4Fe-4S]-[ferredoxin] + 16 H(+). It catalyses the reaction 2,3-bis-O-(phytanyl)-sn-glycerol 1-phosphate + 8 oxidized 2[4Fe-4S]-[ferredoxin] = 2,3-bis-O-(geranylgeranyl)-sn-glycerol 1-phosphate + 8 reduced 2[4Fe-4S]-[ferredoxin] + 16 H(+). The catalysed reaction is a 2,3-bis-O-phytanyl-sn-glycerol 1-phospholipid + 8 A = a 2,3-bis-O-(geranylgeranyl)-sn-glycerol 1-phospholipid + 8 AH2. It carries out the reaction CDP-2,3-bis-O-(geranylgeranyl)-sn-glycerol + 8 AH2 = CDP-2,3-bis-O-(phytanyl)-sn-glycerol + 8 A. The enzyme catalyses archaetidylserine + 8 AH2 = 2,3-bis-O-phytanyl-sn-glycero-3-phospho-L-serine + 8 A. It functions in the pathway membrane lipid metabolism; glycerophospholipid metabolism. In terms of biological role, is involved in the reduction of 2,3-digeranylgeranylglycerophospholipids (unsaturated archaeols) into 2,3-diphytanylglycerophospholipids (saturated archaeols) in the biosynthesis of archaeal membrane lipids. Catalyzes the formation of archaetidic acid (2,3-di-O-phytanyl-sn-glyceryl phosphate) from 2,3-di-O-geranylgeranylglyceryl phosphate (DGGGP) via the hydrogenation of each double bond of the isoprenoid chains. Is also probably able to reduce double bonds of geranyl groups in CDP-2,3-bis-O-(geranylgeranyl)-sn-glycerol and archaetidylserine, thus acting at various stages in the biosynthesis of archaeal membrane lipids. The sequence is that of Digeranylgeranylglycerophospholipid reductase 2 from Methanococcoides burtonii (strain DSM 6242 / NBRC 107633 / OCM 468 / ACE-M).